The sequence spans 342 residues: Aristolochene synthase (342 aa).

Positions 115, 244, 248, and 252 each coordinate Mg(2+). (2E,6E)-farnesyl diphosphate is bound by residues R340 and Y341.

The protein belongs to the terpene synthase family. Homodimer. The cofactor is Mg(2+).

The catalysed reaction is (2E,6E)-farnesyl diphosphate = (+)-aristolochene + diphosphate. It participates in sesquiterpene biosynthesis; aristolochene biosynthesis; aristolochene from farnesyl diphosphate: step 1/1. Functionally, aristolochene synthase; part of the gene cluster that mediates the biosynthesis of PR-toxin, a bicyclic sesquiterpene belonging to the eremophilane class and acting as a mycotoxin. The first step of the pathway is catalyzed by the aristolochene synthase which performs the cyclization of trans,trans-farnesyl diphosphate (FPP) to the bicyclic sesquiterpene aristolochene. Following the formation of aristolochene, the non-oxygenated aristolochene is converted to the trioxygenated intermediate eremofortin B, via 7-epi-neopetasone. This conversion appears to involve three enzymes, a hydroxysterol oxidase-like enzyme, the quinone-oxidase prx3 that forms the quinone-type-structure in the bicyclic nucleus of aristolochene with the C8-oxo group and the C-3 hydroxyl group, and the P450 monooxygenase ORF6 that introduces the epoxide at the double bond between carbons 1 and 2. No monoxy or dioxy-intermediates have been reported to be released to the broth, so these three early oxidative reactions may be coupled together. Eremofortin B is further oxidized by another P450 monooxygenase, that introduces a second epoxide between carbons 7 and 11 prior to acetylation to eremofortin A by the acetyltransferase ORF8. The second epoxidation may be performed by a second P450 monooxygenase. After the acetylation step, eremofortin A is converted to eremofortin C and then to PR-toxin. First the conversion of eremofortin A to eremofortin C proceeds by oxidation of the side chain of the molecule at C-12 and is catalyzed by the short-chain oxidoreductase prx1. The cytochrome P450 monooxygenase ORF5 also plays a role in this step. The primary alcohol formed at C-12 is finally oxidized by the short-chain alcohol dehydrogenase prx4 that forms PR-toxin. This chain is Aristolochene synthase, found in Penicillium roqueforti (strain FM164).